A 254-amino-acid polypeptide reads, in one-letter code: Chaperone protein PmfD (254 aa).

A signal peptide spans 1 to 26 (MNSFSTLKTLFCGSLLALSLVNTTQA).

The protein belongs to the periplasmic pilus chaperone family.

Its subcellular location is the periplasm. Involved in the biogenesis of the PMF fimbria. The polypeptide is Chaperone protein PmfD (pmfD) (Proteus mirabilis (strain HI4320)).